The primary structure comprises 173 residues: dCTP deaminase, dUMP-forming (173 aa).

DCTP-binding positions include R93–R98, D111, T119–E121, and Q138. Catalysis depends on E121, which acts as the Proton donor/acceptor.

It belongs to the dCTP deaminase family. Homotrimer.

It catalyses the reaction dCTP + 2 H2O = dUMP + NH4(+) + diphosphate. It functions in the pathway pyrimidine metabolism; dUMP biosynthesis; dUMP from dCTP: step 1/1. Its function is as follows. Bifunctional enzyme that catalyzes both the deamination of dCTP to dUTP and the hydrolysis of dUTP to dUMP without releasing the toxic dUTP intermediate. This is dCTP deaminase, dUMP-forming from Leptospira interrogans serogroup Icterohaemorrhagiae serovar copenhageni (strain Fiocruz L1-130).